Here is a 129-residue protein sequence, read N- to C-terminus: Replication initiation control protein YabA (129 aa).

The tract at residues 52-71 is disordered; it reads LSLTDEATPEPKAETEAEHG. Positions 60-71 are enriched in basic and acidic residues; it reads PEPKAETEAEHG. The Zn(2+) site is built by H103, C105, C119, and C122.

The protein belongs to the YabA family. In terms of assembly, homotetramer. Interacts with both DnaA and DnaN, acting as a bridge between these two proteins. Zn(2+) serves as cofactor.

The protein localises to the cytoplasm. The protein resides in the nucleoid. Involved in control of chromosome replication initiation. Inhibits the cooperative binding of DnaA to the oriC region, thus negatively regulating initiation of chromosome replication. Inhibits the ability of DnaA-ATP to form a helix on DNA; does not disassemble preformed DnaA-DNA helices. Decreases the residence time of DnaA on the chromosome at its binding sites (oriC, replication forks and promoter-binding sites). Tethers DnaA to the replication machinery via the DNA polymerase beta sliding clamp subunit (dnaN). Associates with oriC and other DnaA targets on the chromosome in a DnaA-dependent manner. The sequence is that of Replication initiation control protein YabA from Listeria monocytogenes serotype 4a (strain HCC23).